The sequence spans 286 residues: 4-diphosphocytidyl-2-C-methyl-D-erythritol kinase (286 aa).

The active site involves K13. 96-106 (PMGGGIGGGSS) provides a ligand contact to ATP. Residue D138 is part of the active site.

This sequence belongs to the GHMP kinase family. IspE subfamily.

It catalyses the reaction 4-CDP-2-C-methyl-D-erythritol + ATP = 4-CDP-2-C-methyl-D-erythritol 2-phosphate + ADP + H(+). The protein operates within isoprenoid biosynthesis; isopentenyl diphosphate biosynthesis via DXP pathway; isopentenyl diphosphate from 1-deoxy-D-xylulose 5-phosphate: step 3/6. Its function is as follows. Catalyzes the phosphorylation of the position 2 hydroxy group of 4-diphosphocytidyl-2C-methyl-D-erythritol. This Pseudoalteromonas atlantica (strain T6c / ATCC BAA-1087) protein is 4-diphosphocytidyl-2-C-methyl-D-erythritol kinase.